The chain runs to 455 residues: Bifunctional protein GlmU (455 aa).

A pyrophosphorylase region spans residues 1–229 (MLNSAMSVVI…ISETEGVNNR (229 aa)). Residues 11 to 14 (LAAG), K25, Q76, 81 to 82 (GT), 103 to 105 (YGD), G140, E154, N169, and N227 each bind UDP-N-acetyl-alpha-D-glucosamine. Residue D105 participates in Mg(2+) binding. N227 lines the Mg(2+) pocket. Positions 230–250 (LQLSRLERIYQAEQAEKLLLA) are linker. The segment at 251–455 (GVMLRDPARF…KQGWQRPVKK (205 aa)) is N-acetyltransferase. UDP-N-acetyl-alpha-D-glucosamine-binding residues include R333 and K351. H363 acts as the Proton acceptor in catalysis. UDP-N-acetyl-alpha-D-glucosamine is bound by residues Y366 and N377. Residues A380, 386 to 387 (NY), S405, A423, and R440 contribute to the acetyl-CoA site.

This sequence in the N-terminal section; belongs to the N-acetylglucosamine-1-phosphate uridyltransferase family. In the C-terminal section; belongs to the transferase hexapeptide repeat family. Homotrimer. Requires Mg(2+) as cofactor.

It is found in the cytoplasm. The catalysed reaction is alpha-D-glucosamine 1-phosphate + acetyl-CoA = N-acetyl-alpha-D-glucosamine 1-phosphate + CoA + H(+). The enzyme catalyses N-acetyl-alpha-D-glucosamine 1-phosphate + UTP + H(+) = UDP-N-acetyl-alpha-D-glucosamine + diphosphate. Its pathway is nucleotide-sugar biosynthesis; UDP-N-acetyl-alpha-D-glucosamine biosynthesis; N-acetyl-alpha-D-glucosamine 1-phosphate from alpha-D-glucosamine 6-phosphate (route II): step 2/2. The protein operates within nucleotide-sugar biosynthesis; UDP-N-acetyl-alpha-D-glucosamine biosynthesis; UDP-N-acetyl-alpha-D-glucosamine from N-acetyl-alpha-D-glucosamine 1-phosphate: step 1/1. It functions in the pathway bacterial outer membrane biogenesis; LPS lipid A biosynthesis. Its function is as follows. Catalyzes the last two sequential reactions in the de novo biosynthetic pathway for UDP-N-acetylglucosamine (UDP-GlcNAc). The C-terminal domain catalyzes the transfer of acetyl group from acetyl coenzyme A to glucosamine-1-phosphate (GlcN-1-P) to produce N-acetylglucosamine-1-phosphate (GlcNAc-1-P), which is converted into UDP-GlcNAc by the transfer of uridine 5-monophosphate (from uridine 5-triphosphate), a reaction catalyzed by the N-terminal domain. The sequence is that of Bifunctional protein GlmU from Salmonella arizonae (strain ATCC BAA-731 / CDC346-86 / RSK2980).